The following is a 482-amino-acid chain: ATP synthase subunit beta (482 aa).

161–168 lines the ATP pocket; that stretch reads GGAGVGKT.

The protein belongs to the ATPase alpha/beta chains family. F-type ATPases have 2 components, CF(1) - the catalytic core - and CF(0) - the membrane proton channel. CF(1) has five subunits: alpha(3), beta(3), gamma(1), delta(1), epsilon(1). CF(0) has four main subunits: a(1), b(1), b'(1) and c(9-12).

The protein resides in the cellular thylakoid membrane. It catalyses the reaction ATP + H2O + 4 H(+)(in) = ADP + phosphate + 5 H(+)(out). Produces ATP from ADP in the presence of a proton gradient across the membrane. The catalytic sites are hosted primarily by the beta subunits. This Gloeothece citriformis (strain PCC 7424) (Cyanothece sp. (strain PCC 7424)) protein is ATP synthase subunit beta.